Reading from the N-terminus, the 139-residue chain is Putative nickel-responsive regulator (139 aa).

Ni(2+)-binding residues include His79, His90, His92, and Cys98.

It belongs to the transcriptional regulatory CopG/NikR family. Ni(2+) is required as a cofactor.

Transcriptional regulator. This is Putative nickel-responsive regulator from Anaeromyxobacter dehalogenans (strain 2CP-C).